A 483-amino-acid polypeptide reads, in one-letter code: L-2-hydroxyglutarate dehydrogenase, mitochondrial (483 aa).

A mitochondrion-targeting transit peptide spans 1–67 (MKHKPETAAF…VDASKTIVRG (67 aa)).

It belongs to the L2HGDH family. FAD is required as a cofactor.

The protein resides in the mitochondrion. It carries out the reaction (S)-2-hydroxyglutarate + A = 2-oxoglutarate + AH2. In terms of biological role, catalyzes the oxidation of (S)-2-hydroxyglutarate to 2-oxoglutarate. Is specific for the (S) enantiomer and possesses very poor activity toward (R)-2-hydroxyglutarate. Has no activity toward related 2-hydroxy acids, such as glycolate, L-lactate or D-lactate. The chain is L-2-hydroxyglutarate dehydrogenase, mitochondrial from Arabidopsis thaliana (Mouse-ear cress).